The following is a 620-amino-acid chain: 1-deoxy-D-xylulose-5-phosphate synthase (620 aa).

Residues His80 and 121–123 (GHS) each bind thiamine diphosphate. Asp152 is a Mg(2+) binding site. Thiamine diphosphate is bound by residues 153-154 (GA), Asn181, Tyr288, and Glu370. Asn181 contacts Mg(2+).

Belongs to the transketolase family. DXPS subfamily. In terms of assembly, homodimer. It depends on Mg(2+) as a cofactor. Thiamine diphosphate is required as a cofactor.

It carries out the reaction D-glyceraldehyde 3-phosphate + pyruvate + H(+) = 1-deoxy-D-xylulose 5-phosphate + CO2. It functions in the pathway metabolic intermediate biosynthesis; 1-deoxy-D-xylulose 5-phosphate biosynthesis; 1-deoxy-D-xylulose 5-phosphate from D-glyceraldehyde 3-phosphate and pyruvate: step 1/1. Functionally, catalyzes the acyloin condensation reaction between C atoms 2 and 3 of pyruvate and glyceraldehyde 3-phosphate to yield 1-deoxy-D-xylulose-5-phosphate (DXP). This is 1-deoxy-D-xylulose-5-phosphate synthase from Citrobacter koseri (strain ATCC BAA-895 / CDC 4225-83 / SGSC4696).